A 358-amino-acid chain; its full sequence is Putative hydrogenase expression/formation protein MJ0993 (358 aa).

Positions 33, 61, and 64 each coordinate Fe cation.

Belongs to the HypD family.

In Methanocaldococcus jannaschii (strain ATCC 43067 / DSM 2661 / JAL-1 / JCM 10045 / NBRC 100440) (Methanococcus jannaschii), this protein is Putative hydrogenase expression/formation protein MJ0993.